A 70-amino-acid polypeptide reads, in one-letter code: Large ribosomal subunit protein uL29 (70 aa).

It belongs to the universal ribosomal protein uL29 family.

This chain is Large ribosomal subunit protein uL29, found in Symbiobacterium thermophilum (strain DSM 24528 / JCM 14929 / IAM 14863 / T).